The following is a 396-amino-acid chain: MAGSSLRQVAVFGATGSIGASALDVIARHPERLRASLLSAGSKVDELLALCATHRPAHAVIADAALYPALRDGLRALGLATQAHAGAEALDALASGDVCDTVVAAIVGAAGLPSTLAAARAGKRLLLANKESLVLAGELLTRTAAAAGAEIIPIDSEHSAIFQCLRSCDASRGVRRVILTASGGPFRGRDRAALAAVTPAQAVAHPKWSMGPKISVDSATMMNKGLEVIEAHHLFGLPGEQIDVLVHPQSLVHSLVEFVDGSTLAQLGLPDMRTTLAVGLAWPERVDSGVGGLDLLRQGRLDFEAPDTAAFPCLRLAWDALRAGGTAPAILNAANEVAVSAFLQGQVGFLAIPALVEHTLTTLPRHNADSLDTLLFADAQARQITERALAHHALHA.

Residues Thr15, Gly16, Ser17, Ile18, Gly41, and Asn129 each contribute to the NADPH site. Lys130 provides a ligand contact to 1-deoxy-D-xylulose 5-phosphate. Residue Glu131 coordinates NADPH. Asp155 lines the Mn(2+) pocket. Residues Ser156, Glu157, Ser182, and His205 each contribute to the 1-deoxy-D-xylulose 5-phosphate site. Glu157 is a binding site for Mn(2+). Gly211 contributes to the NADPH binding site. 1-deoxy-D-xylulose 5-phosphate-binding residues include Ser218, Asn223, Lys224, and Glu227. Residue Glu227 participates in Mn(2+) binding.

Belongs to the DXR family. Mg(2+) serves as cofactor. Mn(2+) is required as a cofactor.

The catalysed reaction is 2-C-methyl-D-erythritol 4-phosphate + NADP(+) = 1-deoxy-D-xylulose 5-phosphate + NADPH + H(+). It functions in the pathway isoprenoid biosynthesis; isopentenyl diphosphate biosynthesis via DXP pathway; isopentenyl diphosphate from 1-deoxy-D-xylulose 5-phosphate: step 1/6. Catalyzes the NADPH-dependent rearrangement and reduction of 1-deoxy-D-xylulose-5-phosphate (DXP) to 2-C-methyl-D-erythritol 4-phosphate (MEP). This Xanthomonas euvesicatoria pv. vesicatoria (strain 85-10) (Xanthomonas campestris pv. vesicatoria) protein is 1-deoxy-D-xylulose 5-phosphate reductoisomerase.